The following is a 751-amino-acid chain: Cytosolic neutral trehalase (751 aa).

Positions 1–15 are enriched in polar residues; the sequence is MDDSALPSNTSNGIN. Disordered regions lie at residues 1–42 and 64–88; these read MDDS…NPES and DFHE…NPRK. Residues 64-78 are compositionally biased toward basic and acidic residues; that stretch reads DFHEMLGDRNTRRGS. Positions 105, 107, 109, 111, and 116 each coordinate Ca(2+). Residues R292, 299 to 300, N336, 345 to 347, E412, R461, and G464 contribute to the substrate site; these read WD and RSQ. Active-site proton donor/acceptor residues include D466 and E670.

Belongs to the glycosyl hydrolase 37 family. Requires Ca(2+) as cofactor.

Its subcellular location is the cytoplasm. The enzyme catalyses alpha,alpha-trehalose + H2O = alpha-D-glucose + beta-D-glucose. Its pathway is carbohydrate degradation. Its activity is regulated as follows. Activated by calcium. Its function is as follows. Hydrolyzes intracellular trehalose to glucose. The disaccharide trehalose serves as a storage carbohydrate that is mobilized during conidial germination. Regulates the level of trehalose as a protectant for cell integrity during heat stress. This chain is Cytosolic neutral trehalase, found in Emericella nidulans (strain FGSC A4 / ATCC 38163 / CBS 112.46 / NRRL 194 / M139) (Aspergillus nidulans).